Here is a 337-residue protein sequence, read N- to C-terminus: Tryptophan--tRNA ligase (337 aa).

ATP contacts are provided by residues R9–T11 and G17–H18. Positions P10 to H18 match the 'HIGH' region motif. D137 provides a ligand contact to L-tryptophan. Residues G149–D151, L187, and K195–S199 each bind ATP. The 'KMSKS' region motif lies at K195 to S199.

The protein belongs to the class-I aminoacyl-tRNA synthetase family. In terms of assembly, homodimer.

It localises to the cytoplasm. It carries out the reaction tRNA(Trp) + L-tryptophan + ATP = L-tryptophyl-tRNA(Trp) + AMP + diphosphate + H(+). Catalyzes the attachment of tryptophan to tRNA(Trp). This Treponema pallidum (strain Nichols) protein is Tryptophan--tRNA ligase.